We begin with the raw amino-acid sequence, 517 residues long: U3 small nucleolar RNA-associated protein 15 homolog (517 aa).

WD repeat units lie at residues 36-75 (KEFG…PIRN), 78-117 (RFHD…SLRQ), 120-159 (GHSK…ELSS), 162-202 (EHTD…SVMT), 204-242 (QHGQ…QQLV), 246-285 (NHHK…HNFD), and 287-324 (ASSI…EKEA).

Part of the small subunit (SSU) processome, composed of more than 70 proteins and the RNA chaperone small nucleolar RNA (snoRNA) U3. May be a component of the proposed t-UTP subcomplex of the ribosomal small subunit (SSU) processome.

It localises to the nucleus. The protein resides in the nucleolus. In terms of biological role, ribosome biogenesis factor. Involved in nucleolar processing of pre-18S ribosomal RNA. Required for optimal pre-ribosomal RNA transcription by RNA polymerase I. Part of the small subunit (SSU) processome, first precursor of the small eukaryotic ribosomal subunit. During the assembly of the SSU processome in the nucleolus, many ribosome biogenesis factors, an RNA chaperone and ribosomal proteins associate with the nascent pre-rRNA and work in concert to generate RNA folding, modifications, rearrangements and cleavage as well as targeted degradation of pre-ribosomal RNA by the RNA exosome. The chain is U3 small nucleolar RNA-associated protein 15 homolog (utp15) from Danio rerio (Zebrafish).